Consider the following 445-residue polypeptide: 3-phosphoshikimate 1-carboxyvinyltransferase (445 aa).

The tract at residues 1–25 is disordered; the sequence is MTDSNQPMPLQARKSGALHGTARVP. The 3-phosphoshikimate site is built by Lys28, Ser29, and Arg33. Lys28 serves as a coordination point for phosphoenolpyruvate. 2 residues coordinate phosphoenolpyruvate: Gly101 and Arg129. Positions 175, 177, 328, and 355 each coordinate 3-phosphoshikimate. Residue Gln177 coordinates phosphoenolpyruvate. Asp328 acts as the Proton acceptor in catalysis. The phosphoenolpyruvate site is built by Arg359 and Arg402.

Belongs to the EPSP synthase family. In terms of assembly, monomer.

It localises to the cytoplasm. The catalysed reaction is 3-phosphoshikimate + phosphoenolpyruvate = 5-O-(1-carboxyvinyl)-3-phosphoshikimate + phosphate. Its pathway is metabolic intermediate biosynthesis; chorismate biosynthesis; chorismate from D-erythrose 4-phosphate and phosphoenolpyruvate: step 6/7. In terms of biological role, catalyzes the transfer of the enolpyruvyl moiety of phosphoenolpyruvate (PEP) to the 5-hydroxyl of shikimate-3-phosphate (S3P) to produce enolpyruvyl shikimate-3-phosphate and inorganic phosphate. This Rhodopseudomonas palustris (strain ATCC BAA-98 / CGA009) protein is 3-phosphoshikimate 1-carboxyvinyltransferase.